The chain runs to 464 residues: Trehalose-6-phosphate synthase (464 aa).

D-glucose 6-phosphate is bound at residue Arg10. 23–24 serves as a coordination point for UDP-alpha-D-glucose; that stretch reads GG. D-glucose 6-phosphate is bound by residues Tyr81 and Asp135. The UDP-alpha-D-glucose site is built by Arg268 and Lys273. Arg306 is a D-glucose 6-phosphate binding site. 371–375 is a binding site for UDP-alpha-D-glucose; it reads LVAKE.

It belongs to the glycosyltransferase 20 family. As to quaternary structure, homotetramer.

It carries out the reaction D-glucose 6-phosphate + UDP-alpha-D-glucose = alpha,alpha-trehalose 6-phosphate + UDP + H(+). It functions in the pathway glycan biosynthesis; trehalose biosynthesis. Its function is as follows. Probably involved in the osmoprotection via the biosynthesis of trehalose. Catalyzes the transfer of glucose from UDP-alpha-D-glucose (UDP-Glc) to D-glucose 6-phosphate (Glc-6-P) to form trehalose-6-phosphate. Acts with retention of the anomeric configuration of the UDP-sugar donor. In Sinorhizobium fredii (strain NBRC 101917 / NGR234), this protein is Trehalose-6-phosphate synthase.